The sequence spans 1578 residues: Mediator of RNA polymerase II transcription subunit 14 (1578 aa).

The LXXLL motif 1 motif lies at 49-53 (LAELL). Residues 561 to 582 (SQSVTAGGTSQSSAPSAATTES) are disordered. A compositionally biased stretch (low complexity) spans 565-580 (TAGGTSQSSAPSAATT). The LXXLL motif 2 motif lies at 739–743 (LKRLL). 2 disordered regions span residues 1009–1173 (RRRS…PDHK) and 1510–1578 (APGG…GGPN). The segment covering 1084 to 1093 (SQSHPNFNMT) has biased composition (polar residues). Composition is skewed to pro residues over residues 1095 to 1104 (PPAPHMPHPS) and 1157 to 1167 (PGMPRPSPRPG). 2 stretches are compositionally biased toward gly residues: residues 1510–1521 (APGGPGGPGPMG) and 1547–1578 (MGGG…GGPN).

Belongs to the Mediator complex subunit 14 family. As to quaternary structure, component of the Mediator complex.

It is found in the nucleus. Functionally, component of the Mediator complex, a coactivator involved in the regulated transcription of nearly all RNA polymerase II-dependent genes. Mediator functions as a bridge to convey information from gene-specific regulatory proteins to the basal RNA polymerase II transcription machinery. Mediator is recruited to promoters by direct interactions with regulatory proteins and serves as a scaffold for the assembly of a functional preinitiation complex with RNA polymerase II and the general transcription factors. The chain is Mediator of RNA polymerase II transcription subunit 14 (MED14) from Aedes aegypti (Yellowfever mosquito).